Reading from the N-terminus, the 93-residue chain is CRISPR-associated endoribonuclease Cas2 3 (93 aa).

Aspartate 10 serves as a coordination point for Mg(2+).

Belongs to the CRISPR-associated endoribonuclease Cas2 protein family. In terms of assembly, homodimer, forms a heterotetramer with a Cas1 homodimer. Requires Mg(2+) as cofactor.

Functionally, CRISPR (clustered regularly interspaced short palindromic repeat), is an adaptive immune system that provides protection against mobile genetic elements (viruses, transposable elements and conjugative plasmids). CRISPR clusters contain sequences complementary to antecedent mobile elements and target invading nucleic acids. CRISPR clusters are transcribed and processed into CRISPR RNA (crRNA). Functions as a ssRNA-specific endoribonuclease. Involved in the integration of spacer DNA into the CRISPR cassette. The sequence is that of CRISPR-associated endoribonuclease Cas2 3 from Chloroflexus aurantiacus (strain ATCC 29366 / DSM 635 / J-10-fl).